A 378-amino-acid polypeptide reads, in one-letter code: MAKKLKKNEEITKKFGDERRKALDDALKNIEKDFGKGAVMRLGERAEQKVQVMSSGSLALDIALGAGGYPKGRIIEIYGPESSGKTTVALHAVAQAQKEGGIAAFIDAEHALDPAYAAALGVNIDELLLSQPDSGEQGLEIAGKLIDSGAVDLVVVDSVAALVPRAEIDGDIGDSHVGLQARMMSQAMRKLSASINKTKTIAIFINQLREKVGVMFGNPETTPGGRALKFYASVRLDVRGTTQIKGTGDQKDSSIGKETKIKVVKNKVAPPFKVAEVEIMYGEGISRTGELVKIASDLDIIQKAGAWFSYNGEKIGQGSENAKRYLADHPELFDEIDLKVRVKFGLLEESEEESAMAVASEETDDLALDLDNGIEIED.

79 to 86 (GPESSGKT) serves as a coordination point for ATP.

This sequence belongs to the RecA family.

Its subcellular location is the cytoplasm. Functionally, can catalyze the hydrolysis of ATP in the presence of single-stranded DNA, the ATP-dependent uptake of single-stranded DNA by duplex DNA, and the ATP-dependent hybridization of homologous single-stranded DNAs. It interacts with LexA causing its activation and leading to its autocatalytic cleavage. The protein is Protein RecA of Streptococcus pyogenes serotype M1.